The sequence spans 158 residues: Peptide deformylase (158 aa).

Residues cysteine 88 and histidine 130 each coordinate Fe cation. Residue glutamate 131 is part of the active site. Fe cation is bound at residue histidine 134.

Belongs to the polypeptide deformylase family. Fe(2+) is required as a cofactor.

The catalysed reaction is N-terminal N-formyl-L-methionyl-[peptide] + H2O = N-terminal L-methionyl-[peptide] + formate. Removes the formyl group from the N-terminal Met of newly synthesized proteins. Requires at least a dipeptide for an efficient rate of reaction. N-terminal L-methionine is a prerequisite for activity but the enzyme has broad specificity at other positions. In Agathobacter rectalis (strain ATCC 33656 / DSM 3377 / JCM 17463 / KCTC 5835 / VPI 0990) (Eubacterium rectale), this protein is Peptide deformylase.